We begin with the raw amino-acid sequence, 485 residues long: N-succinylglutamate 5-semialdehyde dehydrogenase (485 aa).

Residue 220–225 coordinates NAD(+); the sequence is GSANTG. Residues E243 and C278 contribute to the active site.

It belongs to the aldehyde dehydrogenase family. AstD subfamily.

The enzyme catalyses N-succinyl-L-glutamate 5-semialdehyde + NAD(+) + H2O = N-succinyl-L-glutamate + NADH + 2 H(+). Its pathway is amino-acid degradation; L-arginine degradation via AST pathway; L-glutamate and succinate from L-arginine: step 4/5. Catalyzes the NAD-dependent reduction of succinylglutamate semialdehyde into succinylglutamate. The protein is N-succinylglutamate 5-semialdehyde dehydrogenase of Vibrio parahaemolyticus serotype O3:K6 (strain RIMD 2210633).